We begin with the raw amino-acid sequence, 65 residues long: MAVPKRKKSRANTRARRSQWKASVPGFARLEERGRPVFYLPHRARRILDSNGNELFMEYKGRRVG.

The protein belongs to the bacterial ribosomal protein bL32 family.

The polypeptide is Large ribosomal subunit protein bL32 (Tropheryma whipplei (strain TW08/27) (Whipple's bacillus)).